Consider the following 465-residue polypeptide: GTPase Der (465 aa).

EngA-type G domains lie at 27-190 (PVLA…PEAP) and 202-375 (RRIA…AGWE). Residues 33 to 40 (GRPNVGKS), 80 to 84 (DTGGW), 142 to 145 (NKVD), 208 to 215 (GRPNVGKS), 255 to 259 (DTAGI), and 320 to 323 (NKWD) contribute to the GTP site. One can recognise a KH-like domain in the interval 376–458 (TRVPTGRLNA…PIHISVRVRE (83 aa)).

It belongs to the TRAFAC class TrmE-Era-EngA-EngB-Septin-like GTPase superfamily. EngA (Der) GTPase family. In terms of assembly, associates with the 50S ribosomal subunit.

Functionally, GTPase that plays an essential role in the late steps of ribosome biogenesis. In Streptomyces coelicolor (strain ATCC BAA-471 / A3(2) / M145), this protein is GTPase Der.